A 547-amino-acid chain; its full sequence is Chaperonin GroEL (547 aa).

Residues 29–32 (TLGP), lysine 50, 86–90 (DGTTT), glycine 414, 478–480 (NAA), and aspartate 494 each bind ATP.

It belongs to the chaperonin (HSP60) family. In terms of assembly, forms a cylinder of 14 subunits composed of two heptameric rings stacked back-to-back. Interacts with the co-chaperonin GroES.

The protein resides in the cytoplasm. It carries out the reaction ATP + H2O + a folded polypeptide = ADP + phosphate + an unfolded polypeptide.. Together with its co-chaperonin GroES, plays an essential role in assisting protein folding. The GroEL-GroES system forms a nano-cage that allows encapsulation of the non-native substrate proteins and provides a physical environment optimized to promote and accelerate protein folding. The protein is Chaperonin GroEL of Saccharophagus degradans (strain 2-40 / ATCC 43961 / DSM 17024).